We begin with the raw amino-acid sequence, 253 residues long: Probable transcriptional regulatory protein syc0529_d (253 aa).

This sequence belongs to the TACO1 family.

It localises to the cytoplasm. This is Probable transcriptional regulatory protein syc0529_d from Synechococcus sp. (strain ATCC 27144 / PCC 6301 / SAUG 1402/1) (Anacystis nidulans).